A 404-amino-acid polypeptide reads, in one-letter code: V-set and immunoglobulin domain-containing protein 1 (404 aa).

A signal peptide spans 1–22 (MMVFAFWKVFLILNCLAGQVNM). Residues 23 to 133 (VQVTIPDTFV…DFFGKNQGIL (111 aa)) enclose the Ig-like V-type domain. Topologically, residues 23 to 233 (VQVTIPDTFV…EIDLTSSDPE (211 aa)) are extracellular. An N-linked (GlcNAc...) asparagine glycan is attached at N39. Intrachain disulfides connect C44–C117 and C162–C212. The region spanning 141–228 (PSKPFCSIQG…GNSSCEIDLT (88 aa)) is the Ig-like C2-type domain. Residues N201 and N220 are each glycosylated (N-linked (GlcNAc...) asparagine). Residues 234–254 (VGIIIGALVGALTGAAIIICV) form a helical membrane-spanning segment. The Cytoplasmic portion of the chain corresponds to 255-404 (VYFARNKVKS…REEEKETVKA (150 aa)). 2 disordered regions span residues 266–285 (QKNLNSSTELEPMTKVHHSR) and 298–404 (EGTL…TVKA). Residues S271 and S272 each carry the phosphoserine modification. Positions 301–314 (LPSSIHASHNTEPT) are enriched in polar residues. Residues 357 to 383 (MELEPETEPEPEPEPEPQPELESELEP) are compositionally biased toward acidic residues. Residues 393 to 404 (PMREEEKETVKA) are compositionally biased toward basic and acidic residues.

Its subcellular location is the membrane. The chain is V-set and immunoglobulin domain-containing protein 1 (Vsig1) from Rattus norvegicus (Rat).